A 462-amino-acid polypeptide reads, in one-letter code: Glycine--tRNA ligase (462 aa).

Residues arginine 100 and glutamate 175 each contribute to the substrate site. ATP contacts are provided by residues arginine 207–glutamate 209, phenylalanine 217–phenylalanine 222, glutamate 291–leucine 292, and glycine 335–arginine 338. Residue phenylalanine 222–glutamate 226 participates in substrate binding. A substrate-binding site is contributed by glutamate 331–glycine 335.

It belongs to the class-II aminoacyl-tRNA synthetase family. Homodimer.

It localises to the cytoplasm. It catalyses the reaction tRNA(Gly) + glycine + ATP = glycyl-tRNA(Gly) + AMP + diphosphate. Its function is as follows. Catalyzes the attachment of glycine to tRNA(Gly). The protein is Glycine--tRNA ligase of Clostridium acetobutylicum (strain ATCC 824 / DSM 792 / JCM 1419 / IAM 19013 / LMG 5710 / NBRC 13948 / NRRL B-527 / VKM B-1787 / 2291 / W).